A 195-amino-acid chain; its full sequence is Probable peroxygenase 4 (195 aa).

Positions 14–49 (EEDNFLQRHVAFFDRNKDGIVYPSETFQGFRAIGCG) constitute an EF-hand domain. Residue H22 coordinates heme. Residues D27, N29, D31, and E38 each coordinate Ca(2+). The Proline-knot signature appears at 70–79 (PGKGFSIWFP). S177 is subject to Phosphoserine.

The protein belongs to the caleosin family. As to quaternary structure, homodimer. Heme b is required as a cofactor. It depends on Ca(2+) as a cofactor. In terms of tissue distribution, expressed in roots, leaves, stems, shoots, flowers and germinated seeds. Barely detected in dry seeds prior to germination. Preferentially expressed in vascular bundles and in guard cells.

The protein localises to the lipid droplet. The catalysed reaction is RH + ROOH = ROH + ROH.. Calcium-binding peroxygenase involved in the degradation of storage lipid in oil bodies. May be involved in the interaction between oil bodies and vacuoles during seed germination. Acts as a negative regulator of abscisic acid responses in non-seed tissues. The chain is Probable peroxygenase 4 (PXG4) from Arabidopsis thaliana (Mouse-ear cress).